Consider the following 253-residue polypeptide: Phycocyanobilin:ferredoxin oxidoreductase (253 aa).

It belongs to the HY2 family.

It carries out the reaction (2R,3Z)-phycocyanobilin + 4 oxidized [2Fe-2S]-[ferredoxin] = biliverdin IXalpha + 4 reduced [2Fe-2S]-[ferredoxin] + 4 H(+). Functionally, catalyzes the four-electron reduction of biliverdin IX-alpha (2-electron reduction at both the A and D rings); the reaction proceeds via an isolatable 2-electron intermediate, 181,182-dihydrobiliverdin. The chain is Phycocyanobilin:ferredoxin oxidoreductase (pcyA) from Gloeobacter violaceus (strain ATCC 29082 / PCC 7421).